Reading from the N-terminus, the 296-residue chain is NAD kinase (296 aa).

Aspartate 73 (proton acceptor) is an active-site residue. NAD(+) contacts are provided by residues aspartate 73–glycine 74, lysine 78, asparagine 151–glutamate 152, arginine 178, aspartate 180, and threonine 191–serine 196.

The protein belongs to the NAD kinase family. The cofactor is a divalent metal cation.

The protein resides in the cytoplasm. The catalysed reaction is NAD(+) + ATP = ADP + NADP(+) + H(+). Its function is as follows. Involved in the regulation of the intracellular balance of NAD and NADP, and is a key enzyme in the biosynthesis of NADP. Catalyzes specifically the phosphorylation on 2'-hydroxyl of the adenosine moiety of NAD to yield NADP. The sequence is that of NAD kinase from Francisella tularensis subsp. tularensis (strain WY96-3418).